The primary structure comprises 138 residues: Thyrotropin subunit beta (138 aa).

The signal sequence occupies residues 1–20; the sequence is MTAIYLMSMLFGLACGQAMS. Cystine bridges form between Cys-22-Cys-72, Cys-36-Cys-87, Cys-39-Cys-125, Cys-47-Cys-103, Cys-51-Cys-105, and Cys-108-Cys-115. A glycan (N-linked (GlcNAc...) asparagine) is linked at Asn-43. Residues 133–138 constitute a propeptide that is removed on maturation; that stretch reads VVGFSI.

It belongs to the glycoprotein hormones subunit beta family. In terms of assembly, heterodimer of a common alpha chain and a unique beta chain which confers biological specificity to thyrotropin, lutropin, follitropin and gonadotropin.

Its subcellular location is the secreted. Its function is as follows. Indispensable for the control of thyroid structure and metabolism. This Canis lupus familiaris (Dog) protein is Thyrotropin subunit beta (TSHB).